Consider the following 205-residue polypeptide: Octanoyltransferase (205 aa).

The region spanning 30-205 is the BPL/LPL catalytic domain; the sequence is NSADELVWLL…ILKKEFYKIF (176 aa). Substrate is bound by residues 68–75, 140–142, and 153–155; these read RGGKHTYH, AFG, and GIA. Catalysis depends on cysteine 171, which acts as the Acyl-thioester intermediate.

The protein belongs to the LipB family.

The protein resides in the cytoplasm. It carries out the reaction octanoyl-[ACP] + L-lysyl-[protein] = N(6)-octanoyl-L-lysyl-[protein] + holo-[ACP] + H(+). It participates in protein modification; protein lipoylation via endogenous pathway; protein N(6)-(lipoyl)lysine from octanoyl-[acyl-carrier-protein]: step 1/2. Functionally, catalyzes the transfer of endogenously produced octanoic acid from octanoyl-acyl-carrier-protein onto the lipoyl domains of lipoate-dependent enzymes. Lipoyl-ACP can also act as a substrate although octanoyl-ACP is likely to be the physiological substrate. The polypeptide is Octanoyltransferase (Wolbachia pipientis wMel).